A 222-amino-acid polypeptide reads, in one-letter code: Small ribosomal subunit protein uS7m (222 aa).

A mitochondrion-targeting transit peptide spans 1–14 (MTTKLARFAQKRWI).

It belongs to the universal ribosomal protein uS7 family. In terms of assembly, component of the mitochondrial ribosome small subunit (28S) which comprises a 12S rRNA and about 30 distinct proteins.

Its subcellular location is the mitochondrion. This chain is Small ribosomal subunit protein uS7m (mrps-7), found in Caenorhabditis elegans.